The primary structure comprises 1527 residues: Lysophospholipase nte1 (1527 aa).

The Cytoplasmic portion of the chain corresponds to 1–73 (MADSGASVPS…SPPTPTTMVG (73 aa)). Residues 74 to 94 (WIGWVFSLVFQTIPSVLYWVI) traverse the membrane as a helical segment. Residues 95–116 (TFSTITLPTWLFTLFSMSLTFT) are Lumenal-facing. The chain crosses the membrane as a helical span at residues 117-137 (MNFTTLLLIVLGLVSTVSWFI). The Cytoplasmic segment spans residues 138-1527 (RYRFLNMYSR…RTLAPRRASI (1390 aa)). The span at 299-310 (GSSSSMSSVQPS) shows a compositional bias: low complexity. Disordered regions lie at residues 299–387 (GSSS…RRKS), 567–596 (DQFA…QRKD), and 765–785 (ATSR…KKPS). Residues 364 to 377 (RASSYHPNGQSTAS) show a composition bias toward polar residues. A nucleoside 3',5'-cyclic phosphate is bound by residues 682 to 809 (GGTS…SYRS) and 846 to 966 (RLTG…IAQR). The 165-residue stretch at 1224-1388 (LVLGGGGARG…IDNLTVAHMK (165 aa)) folds into the PNPLA domain. A GXGXXG motif is present at residues 1228 to 1233 (GGGARG). The GXSXG signature appears at 1255–1259 (GTSIG). Residue Ser1257 is the Nucleophile of the active site. The active-site Proton acceptor is Asp1375. A DGA/G motif is present at residues 1375 to 1377 (DGG). Positions 1504 to 1527 (LPLPEENEEKKKLQRTLAPRRASI) are disordered.

This sequence belongs to the NTE family.

It is found in the endoplasmic reticulum membrane. The catalysed reaction is a 1-acyl-sn-glycero-3-phosphocholine + H2O = sn-glycerol 3-phosphocholine + a fatty acid + H(+). With respect to regulation, inhibited by organophosphorus esters. In terms of biological role, intracellular phospholipase B that catalyzes the double deacylation of phosphatidylcholine (PC) to glycerophosphocholine (GroPCho). Plays an important role in membrane lipid homeostasis. Responsible for the rapid PC turnover in response to inositol, elevated temperatures, or when choline is present in the growth medium. The polypeptide is Lysophospholipase nte1 (nte1) (Emericella nidulans (strain FGSC A4 / ATCC 38163 / CBS 112.46 / NRRL 194 / M139) (Aspergillus nidulans)).